We begin with the raw amino-acid sequence, 452 residues long: MAGYLRAVSSLCRASGSARTWAPAALTVPSWPEQPRRHYAEKRIKVEKPVVEMDGDEMTRIIWQFIKEKLILPHVDVQLKYFDLGLPNRDQTNDQVTIDSALATQKYSVAVKCATITPDEARVEEFKLKKMWKSPNGTIRNILGGTVFREPIICKNIPRLVPGWTKPITIGRHAHGDQYKATDFVVDRAGTFKLVFTPKDGSSAKEWEVYNFPAGGVGMGMYNTDESISGFAHSCFQYSIQKKWPLYLSTKNTILKAYDGRFKDIFQEIFDKHYKTDFDKNKIWYEHRLIDDMVAQVLKSSGGFVWACKNYDGDVQSDILAQGFGSLGLMTSVLVCPDGKTIEAEAAHGTVTRHYREHQKGRPTSTNPIASIFAWTRGLEHRGKLDGNQDLIRFAQTLEKVCVQTVESGAMTKDLAGCIHGLSNVKLNEHFLNTTDFLDTIKSNLDRALGKQ.

The N-terminal 39 residues, 1-39 (MAGYLRAVSSLCRASGSARTWAPAALTVPSWPEQPRRHY), are a transit peptide targeting the mitochondrion. An N6-acetyllysine mark is found at lysine 45, lysine 48, lysine 67, and lysine 69. Residues lysine 80 and lysine 106 each carry the N6-acetyllysine; alternate modification. N6-succinyllysine; alternate is present on residues lysine 80 and lysine 106. Residues 115-117 (TIT) and arginine 122 each bind NADP(+). Threonine 117 provides a ligand contact to D-threo-isocitrate. D-threo-isocitrate contacts are provided by residues 134–140 (SPNGTIR) and arginine 149. Lysine 155 carries the N6-acetyllysine modification. Lysine 166 bears the N6-acetyllysine; alternate mark. The residue at position 166 (lysine 166) is an N6-succinyllysine; alternate. Residue arginine 172 coordinates D-threo-isocitrate. Lysine 180 and lysine 193 each carry N6-acetyllysine; alternate. Lysine 180 and lysine 193 each carry N6-succinyllysine; alternate. N6-acetyllysine is present on lysine 199. The residue at position 256 (lysine 256) is an N6-acetyllysine; alternate. Position 256 is an N6-succinyllysine; alternate (lysine 256). N6-acetyllysine is present on residues lysine 263, lysine 272, lysine 275, and lysine 280. Residue lysine 282 is modified to N6-acetyllysine; alternate. N6-succinyllysine; alternate is present on lysine 282. Aspartate 291 contributes to the Mn(2+) binding site. Lysine 299 serves as a coordination point for NADP(+). Aspartate 314 lines the Mn(2+) pocket. NADP(+) contacts are provided by residues 349–354 (GTVTRH) and asparagine 367. Lysine 384 is modified (N6-acetyllysine; alternate). Lysine 384 bears the N6-succinyllysine; alternate mark. 3 positions are modified to N6-acetyllysine: lysine 400, lysine 413, and lysine 442.

It belongs to the isocitrate and isopropylmalate dehydrogenases family. In terms of assembly, homodimer. Mg(2+) is required as a cofactor. Requires Mn(2+) as cofactor. Post-translationally, acetylation at Lys-413 dramatically reduces catalytic activity. Deacetylated by SIRT3. As to expression, predominantly expressed in heart, liver and kidney. Expressed in activated B lymphocytes.

The protein resides in the mitochondrion. It carries out the reaction D-threo-isocitrate + NADP(+) = 2-oxoglutarate + CO2 + NADPH. Plays a role in intermediary metabolism and energy production. It may tightly associate or interact with the pyruvate dehydrogenase complex. The protein is Isocitrate dehydrogenase [NADP], mitochondrial (Idh2) of Mus musculus (Mouse).